The primary structure comprises 302 residues: 4-hydroxy-tetrahydrodipicolinate synthase (302 aa).

Threonine 44 is a pyruvate binding site. Tyrosine 132 serves as the catalytic Proton donor/acceptor. Lysine 160 acts as the Schiff-base intermediate with substrate in catalysis. Valine 202 is a binding site for pyruvate.

It belongs to the DapA family. As to quaternary structure, homotetramer; dimer of dimers.

Its subcellular location is the cytoplasm. It carries out the reaction L-aspartate 4-semialdehyde + pyruvate = (2S,4S)-4-hydroxy-2,3,4,5-tetrahydrodipicolinate + H2O + H(+). It functions in the pathway amino-acid biosynthesis; L-lysine biosynthesis via DAP pathway; (S)-tetrahydrodipicolinate from L-aspartate: step 3/4. In terms of biological role, catalyzes the condensation of (S)-aspartate-beta-semialdehyde [(S)-ASA] and pyruvate to 4-hydroxy-tetrahydrodipicolinate (HTPA). The sequence is that of 4-hydroxy-tetrahydrodipicolinate synthase from Thermomicrobium roseum (strain ATCC 27502 / DSM 5159 / P-2).